Here is a 377-residue protein sequence, read N- to C-terminus: N5-carboxyaminoimidazole ribonucleotide synthase (377 aa).

Residues Arg93, Lys133, 138–144 (GYDGKGQ), 175–178 (EEFV), Glu183, His206, and 257–258 (NE) contribute to the ATP site. In terms of domain architecture, ATP-grasp spans 97–287 (KALLDNAGVR…QFENHLRAVC (191 aa)).

Belongs to the PurK/PurT family. In terms of assembly, homodimer.

The catalysed reaction is 5-amino-1-(5-phospho-beta-D-ribosyl)imidazole + hydrogencarbonate + ATP = 5-carboxyamino-1-(5-phospho-D-ribosyl)imidazole + ADP + phosphate + 2 H(+). It functions in the pathway purine metabolism; IMP biosynthesis via de novo pathway; 5-amino-1-(5-phospho-D-ribosyl)imidazole-4-carboxylate from 5-amino-1-(5-phospho-D-ribosyl)imidazole (N5-CAIR route): step 1/2. Catalyzes the ATP-dependent conversion of 5-aminoimidazole ribonucleotide (AIR) and HCO(3)(-) to N5-carboxyaminoimidazole ribonucleotide (N5-CAIR). This Vibrio parahaemolyticus serotype O3:K6 (strain RIMD 2210633) protein is N5-carboxyaminoimidazole ribonucleotide synthase.